The chain runs to 809 residues: MPKQDSLWLKSLRWIQKYLVHTIVVPQDPFADLNLDASRPLAYVMKTESLSDIAALSEITAKLGLPSPYEPLVVNGVVAPRVVCLEGRKPLFGDRASNEPFLECFMRLLAVHKEKPELDIQLVPVSLYWGRTPGKEDDTMKAAVLERENPTWLRKCLMILFLGRHNFVQFSNAVSLRYMADEHGTDMGIAHKLARVARVHFRRQRKVMTGPVLPNRQALFDSLLKSESLRKAIQEEAASKKISETQARETAIEYLDEIAANYSDSLVRIAERFLTWLWNKLYSGINIKGAEQIRQLHHDGHEIVYVPCHRSHMDYLLLSYILYYQGMVPPHIAAGINLNFWPAGPLFRRGGAFFIRRSFNGNKLYTAVFREYLDQLFAKGYSVEYFSEGGRSRTGRLLAPKTGMIAMTINSVLRGIERPVTLVPVYLGYDHVMEVATYHKELSGKKKQKESVWQVFGAIRKLGNFGQGYVNFGEPITLQNFLNETAPNWRSEVADDPEQKPTWLTPAVNVLANRVMTRINDAAAASSITLTSLVLLASEQNALERCLLERQLDLYLTLLKRVPYTSFTSVAEGDGKHLVQQGLELNKFSISADPLGEIVSIDDKQAISMTYYRNNIIHLFIIPSLIASCLINNKQISRAQIFGVVNDFYPLLKAELFMGIKDLPSYVDQVLDLFIEQGLVEETELLSVATERASQMLLLAGSVNETLQRYAIIFNLLAHRPKMERSDLESESHLLAQRLGALHGITAPEFYDKKLYNTLSVKLKELGYFSGKEDKSDVERIREQANNLLRASVRQTIVASVTAEQSFNG.

An HXXXXD motif motif is present at residues 309–314 (HRSHMD).

This sequence belongs to the GPAT/DAPAT family.

The protein resides in the cell inner membrane. The enzyme catalyses sn-glycerol 3-phosphate + an acyl-CoA = a 1-acyl-sn-glycero-3-phosphate + CoA. It participates in phospholipid metabolism; CDP-diacylglycerol biosynthesis; CDP-diacylglycerol from sn-glycerol 3-phosphate: step 1/3. The chain is Glycerol-3-phosphate acyltransferase from Shewanella oneidensis (strain ATCC 700550 / JCM 31522 / CIP 106686 / LMG 19005 / NCIMB 14063 / MR-1).